The sequence spans 134 residues: Rubredoxin-2 (134 aa).

The 53-residue stretch at 1–53 (MAKYQCPDCQYIYDECKGEPHEGFQPNTNWGEIPEEWACPDCAVRDKIDFKML) folds into the Rubredoxin-like domain. Residues cysteine 6, cysteine 9, cysteine 39, and cysteine 42 each coordinate Fe cation. The span at 99 to 116 (SITDERENTPDNKVERRS) shows a compositional bias: basic and acidic residues. Positions 99-134 (SITDERENTPDNKVERRSQSQAVRRSSVKKIKNNKR) are disordered. Over residues 124 to 134 (SSVKKIKNNKR) the composition is skewed to basic residues.

It belongs to the rubredoxin family. It depends on Fe(3+) as a cofactor.

It localises to the cytoplasm. It functions in the pathway hydrocarbon metabolism; alkane degradation. Functionally, involved in the hydrocarbon hydroxylating system, which transfers electrons from NADH to rubredoxin reductase and then through rubredoxin to alkane 1 monooxygenase. The polypeptide is Rubredoxin-2 (alkF) (Pseudomonas putida (Arthrobacter siderocapsulatus)).